The chain runs to 338 residues: D-xylulose reductase (338 aa).

3 residues coordinate Zn(2+): Cys40, His65, and Glu151.

This sequence belongs to the zinc-containing alcohol dehydrogenase family. Homotetramer. Zn(2+) is required as a cofactor.

It carries out the reaction xylitol + NAD(+) = D-xylulose + NADH + H(+). The polypeptide is D-xylulose reductase (Morganella morganii (Proteus morganii)).